The chain runs to 290 residues: Release factor glutamine methyltransferase (290 aa).

Residues Asp140 and Asn181 each coordinate S-adenosyl-L-methionine. 181–184 is a substrate binding site; that stretch reads NPPY.

This sequence belongs to the protein N5-glutamine methyltransferase family. PrmC subfamily.

It catalyses the reaction L-glutaminyl-[peptide chain release factor] + S-adenosyl-L-methionine = N(5)-methyl-L-glutaminyl-[peptide chain release factor] + S-adenosyl-L-homocysteine + H(+). In terms of biological role, methylates the class 1 translation termination release factors RF1/PrfA and RF2/PrfB on the glutamine residue of the universally conserved GGQ motif. In Chlamydia trachomatis serovar D (strain ATCC VR-885 / DSM 19411 / UW-3/Cx), this protein is Release factor glutamine methyltransferase.